The primary structure comprises 594 residues: Adenine deaminase 1 (594 aa).

Belongs to the metallo-dependent hydrolases superfamily. Adenine deaminase family. Mn(2+) is required as a cofactor.

It catalyses the reaction adenine + H2O + H(+) = hypoxanthine + NH4(+). In Jannaschia sp. (strain CCS1), this protein is Adenine deaminase 1.